The chain runs to 724 residues: Hyaluronan mediated motility receptor (724 aa).

Disordered stretches follow at residues 1–22 (MSFP…PSPG) and 40–81 (KSQR…QKND). Ser20 is subject to Phosphoserine. Composition is skewed to basic and acidic residues over residues 46-60 (QQKE…DKDT) and 70-81 (KSSESKESQKND). Asn133, Asn477, Asn567, and Asn588 each carry an N-linked (GlcNAc...) asparagine glycan. The interval 365–546 (EEMVKEKNLF…ITDLQNQLKQ (182 aa)) is required for interaction with FAM83D. Hyaluronic acid-binding stretches follow at residues 635–645 (KQKIKHVVKLK) and 657–666 (KLRCQLAKKK). Thr703 is subject to Phosphothreonine.

Interacts with ANKRD26. Interacts with DYNLL1. Interacts with FAM83D/CHICA. As to expression, expressed in testis. Expressed in the breast.

The protein resides in the cell surface. The protein localises to the cytoplasm. It is found in the cytoskeleton. Its subcellular location is the spindle. In terms of biological role, receptor for hyaluronic acid (HA). Involved in cell motility. When hyaluronan binds to HMMR, the phosphorylation of a number of proteins, including PTK2/FAK1 occurs. May also be involved in cellular transformation and metastasis formation, and in regulating extracellular-regulated kinase (ERK) activity. May act as a regulator of adipogenisis. In Homo sapiens (Human), this protein is Hyaluronan mediated motility receptor (HMMR).